A 219-amino-acid polypeptide reads, in one-letter code: Orotate phosphoribosyltransferase (219 aa).

K26 is a 5-phospho-alpha-D-ribose 1-diphosphate binding site. 34 to 35 (FF) contacts orotate. 5-phospho-alpha-D-ribose 1-diphosphate-binding positions include 72-73 (YK), R102, K103, K106, H108, and 128-136 (DDVITAGTA). T132 and R160 together coordinate orotate.

The protein belongs to the purine/pyrimidine phosphoribosyltransferase family. PyrE subfamily. Homodimer.

It carries out the reaction orotidine 5'-phosphate + diphosphate = orotate + 5-phospho-alpha-D-ribose 1-diphosphate. It participates in pyrimidine metabolism; UMP biosynthesis via de novo pathway; UMP from orotate: step 1/2. In terms of biological role, catalyzes the transfer of a ribosyl phosphate group from 5-phosphoribose 1-diphosphate to orotate, leading to the formation of orotidine monophosphate (OMP). The protein is Orotate phosphoribosyltransferase (URA5) of Yarrowia lipolytica (strain CLIB 122 / E 150) (Yeast).